A 296-amino-acid polypeptide reads, in one-letter code: MHVPVLLEELILALEINPKGFYVDLTLGRGGHSLAILEKISNGKLVVFDKDQDALDQTRPKLLAYKQNIEIIWSDFSRFDFYLENLGIQFVDGFIIDLGVSSPQIDDPERGFSYSKDGNLDMRMDKSQKLSAFIVLNEYPYEKLVEIFFKYGQIPYAREIARAIINSRPLKTTFELVNLVKKVIPALVLVKKNFIKNVFQAVRIEVNNELDSLQKLLEKLPKFLKQGSKVAIITFHSLEDRIVKKAFLDLIRKDKLEFFQKGLPKFSMKVFRPKANELKSNPRAKSAKLRLLLKNR.

Residues 30-32, Asp49, Phe76, Asp97, and Gln104 contribute to the S-adenosyl-L-methionine site; that span reads GGH.

It belongs to the methyltransferase superfamily. RsmH family.

The protein resides in the cytoplasm. It carries out the reaction cytidine(1402) in 16S rRNA + S-adenosyl-L-methionine = N(4)-methylcytidine(1402) in 16S rRNA + S-adenosyl-L-homocysteine + H(+). Its function is as follows. Specifically methylates the N4 position of cytidine in position 1402 (C1402) of 16S rRNA. The chain is Ribosomal RNA small subunit methyltransferase H from Mesomycoplasma hyopneumoniae (strain 7448) (Mycoplasma hyopneumoniae).